Here is a 232-residue protein sequence, read N- to C-terminus: Ribonuclease P protein component 3 (232 aa).

The protein belongs to the eukaryotic/archaeal RNase P protein component 3 family. In terms of assembly, consists of a catalytic RNA component and at least 4-5 protein subunits.

It is found in the cytoplasm. It carries out the reaction Endonucleolytic cleavage of RNA, removing 5'-extranucleotides from tRNA precursor.. In terms of biological role, part of ribonuclease P, a protein complex that generates mature tRNA molecules by cleaving their 5'-ends. The polypeptide is Ribonuclease P protein component 3 (Methanococcus maripaludis (strain C7 / ATCC BAA-1331)).